Reading from the N-terminus, the 860-residue chain is Gag-Pro polyprotein (860 aa).

G2 carries N-myristoyl glycine; by host lipidation. Basic and acidic residues-rich tracts occupy residues 151 to 169 and 178 to 191; these read YDEP…EKDH and QRKE…KEKD. The interval 151 to 191 is disordered; sequence YDEPYEEKEKADKNEEKDHVRKIKKVVQRKENSEGKRKEKD. The PTAP/PSAP motif signature appears at 305-308; it reads PSAP. 2 consecutive CCHC-type zinc fingers follow at residues 525–542 and 552–569; these read PVCF…DCKD and GLCP…ECKS. Residues 572-631 are disordered; that stretch reads DKDGNPLPPLETNAENSKNLVKGQSPSPAQKGDGVKGSGLNPEAPPFTIHDLPRGTPGSA. Residues 584–599 are compositionally biased toward polar residues; sequence NAENSKNLVKGQSPSP. The 76-residue stretch at 766–841 folds into the Peptidase A2 domain; the sequence is FLGLLDTGAD…LPFTLWGRDI (76 aa). The active-site Protease; shared with dimeric partner is D771.

In terms of assembly, homodimer; when myristoylated. Homodimer. As to quaternary structure, NC-dUTPase is a homotrimer. In terms of processing, released by autocatalytic processing. Post-translationally, myristoylated. Myristoylation of the matrix (MA) domain mediates the transport and binding of Gag polyproteins to the host plasma membrane and is required for the assembly of viral particles. Specific enzymatic cleavages in vivo yield mature proteins.

The protein localises to the virion. The catalysed reaction is dUTP + H2O = dUMP + diphosphate + H(+). Its activity is regulated as follows. Inhibited by pepstatin A. Matrix protein. In terms of biological role, nucleocapsid protein p14: Binds strongly to viral nucleic acids and promote their aggregation. Also destabilizes the nucleic acids duplexes via highly structured zinc-binding motifs. Functionally, capsid protein. Its function is as follows. The aspartyl protease mediates proteolytic cleavages of Gag and Gag-Pol polyproteins during or shortly after the release of the virion from the plasma membrane. Cleavages take place as an ordered, step-wise cascade to yield mature proteins. This process is called maturation. Displays maximal activity during the budding process just prior to particle release from the cell. The polypeptide is Gag-Pro polyprotein (gag-pro) (Mouse mammary tumor virus (strain BR6) (MMTV)).